Here is a 121-residue protein sequence, read N- to C-terminus: Small ribosomal subunit protein uS13 (121 aa).

Positions 91-121 are disordered; sequence HRMSLPVRGQRTRTNARTRRGSRKTVAGRKK. The segment covering 100–121 has biased composition (basic residues); the sequence is QRTRTNARTRRGSRKTVAGRKK.

The protein belongs to the universal ribosomal protein uS13 family. Part of the 30S ribosomal subunit. Forms a loose heterodimer with protein S19. Forms two bridges to the 50S subunit in the 70S ribosome.

Functionally, located at the top of the head of the 30S subunit, it contacts several helices of the 16S rRNA. In the 70S ribosome it contacts the 23S rRNA (bridge B1a) and protein L5 of the 50S subunit (bridge B1b), connecting the 2 subunits; these bridges are implicated in subunit movement. Contacts the tRNAs in the A and P-sites. This is Small ribosomal subunit protein uS13 from Prochlorococcus marinus (strain MIT 9301).